The following is a 446-amino-acid chain: tRNA-2-methylthio-N(6)-dimethylallyladenosine synthase (446 aa).

The 117-residue stretch at 5–121 folds into the MTTase N-terminal domain; that stretch reads RRFYIQTFGC…LPSLIDDAAS (117 aa). Residues cysteine 14, cysteine 50, cysteine 84, cysteine 157, cysteine 161, and cysteine 164 each contribute to the [4Fe-4S] cluster site. The Radical SAM core domain maps to 143 to 373; the sequence is REGRISAFIP…IDLQQEISAE (231 aa). The TRAM domain occupies 376–439; that stretch reads RRQVGTVAEV…SATLSGSREG (64 aa).

This sequence belongs to the methylthiotransferase family. MiaB subfamily. In terms of assembly, monomer. [4Fe-4S] cluster serves as cofactor.

It localises to the cytoplasm. It catalyses the reaction N(6)-dimethylallyladenosine(37) in tRNA + (sulfur carrier)-SH + AH2 + 2 S-adenosyl-L-methionine = 2-methylsulfanyl-N(6)-dimethylallyladenosine(37) in tRNA + (sulfur carrier)-H + 5'-deoxyadenosine + L-methionine + A + S-adenosyl-L-homocysteine + 2 H(+). In terms of biological role, catalyzes the methylthiolation of N6-(dimethylallyl)adenosine (i(6)A), leading to the formation of 2-methylthio-N6-(dimethylallyl)adenosine (ms(2)i(6)A) at position 37 in tRNAs that read codons beginning with uridine. The sequence is that of tRNA-2-methylthio-N(6)-dimethylallyladenosine synthase from Chlorobium luteolum (strain DSM 273 / BCRC 81028 / 2530) (Pelodictyon luteolum).